The sequence spans 107 residues: MKQFRIHKDDKVMVIAGKDKGKIGKVLKILRNKDRILVEKVNVAKRHVRPNPYRQQPGGIIEKEMPLHVSNVMVVCDACAKPTKVGYRYTEDGKKVRFCKKCNEIID.

The protein belongs to the universal ribosomal protein uL24 family. Part of the 50S ribosomal subunit.

Functionally, one of two assembly initiator proteins, it binds directly to the 5'-end of the 23S rRNA, where it nucleates assembly of the 50S subunit. In terms of biological role, one of the proteins that surrounds the polypeptide exit tunnel on the outside of the subunit. This is Large ribosomal subunit protein uL24 from Nitratidesulfovibrio vulgaris (strain ATCC 29579 / DSM 644 / CCUG 34227 / NCIMB 8303 / VKM B-1760 / Hildenborough) (Desulfovibrio vulgaris).